The chain runs to 312 residues: Ribosomal protein L11 methyltransferase (312 aa).

4 residues coordinate S-adenosyl-L-methionine: T164, G185, D207, and N249.

Belongs to the methyltransferase superfamily. PrmA family.

It localises to the cytoplasm. The catalysed reaction is L-lysyl-[protein] + 3 S-adenosyl-L-methionine = N(6),N(6),N(6)-trimethyl-L-lysyl-[protein] + 3 S-adenosyl-L-homocysteine + 3 H(+). Its function is as follows. Methylates ribosomal protein L11. The chain is Ribosomal protein L11 methyltransferase from Clostridium novyi (strain NT).